The following is a 367-amino-acid chain: Female-specific protein transformer (367 aa).

The interval 86 to 280 (ESISSKKIKS…HRHHRSQERS (195 aa)) is disordered. Residues 109–129 (VKQNSPDVTQKFTKKYGSSEN) are compositionally biased toward polar residues. Over residues 130-144 (PDFRRHSSYEKDNYH) the composition is skewed to basic and acidic residues. The segment covering 195–223 (NRRRSSHRSRRGSGSPRSRRYTSRHRRRS) has biased composition (basic residues). Residues 229–238 (TSWKHNPEHR) are compositionally biased toward basic and acidic residues. Residues 239–257 (TSRRSRTRSPRGNRSRRRS) are compositionally biased toward basic residues.

In terms of biological role, sex differentiation protein controlling female somatic sexual differentiation. May act by promoting the formation of a splicing enhancer complex. This chain is Female-specific protein transformer, found in Musca domestica (House fly).